The chain runs to 206 residues: Guanylate kinase (206 aa).

Positions 3–183 (GNLYILSAPS…ALTELKSILT (181 aa)) constitute a Guanylate kinase-like domain. Position 10–17 (10–17 (APSGAGKS)) interacts with ATP.

Belongs to the guanylate kinase family.

The protein resides in the cytoplasm. It carries out the reaction GMP + ATP = GDP + ADP. Essential for recycling GMP and indirectly, cGMP. This is Guanylate kinase from Haemophilus ducreyi (strain 35000HP / ATCC 700724).